The sequence spans 320 residues: Cytochrome f (320 aa).

Residues 1-35 form the signal peptide; that stretch reads MQNRNTFSWVKDQMSRFISVSIMIYVITRTSISNA. 4 residues coordinate heme: Tyr36, Cys56, Cys59, and His60. The helical transmembrane segment at 286-306 threads the bilayer; that stretch reads VQGLLFFFASVILAQIFLVLK.

This sequence belongs to the cytochrome f family. In terms of assembly, the 4 large subunits of the cytochrome b6-f complex are cytochrome b6, subunit IV (17 kDa polypeptide, petD), cytochrome f and the Rieske protein, while the 4 small subunits are PetG, PetL, PetM and PetN. The complex functions as a dimer. Heme serves as cofactor.

Its subcellular location is the plastid. The protein resides in the chloroplast thylakoid membrane. Functionally, component of the cytochrome b6-f complex, which mediates electron transfer between photosystem II (PSII) and photosystem I (PSI), cyclic electron flow around PSI, and state transitions. The sequence is that of Cytochrome f from Ceratophyllum demersum (Rigid hornwort).